The sequence spans 319 residues: Thioredoxin reductase (319 aa).

37–44 (ERGVPGGQ) contributes to the FAD binding site. An intrachain disulfide couples cysteine 136 to cysteine 139. FAD is bound at residue 279-288 (DVRAKSLRQI).

The protein belongs to the class-II pyridine nucleotide-disulfide oxidoreductase family. Homodimer. FAD serves as cofactor.

It is found in the cytoplasm. The enzyme catalyses [thioredoxin]-dithiol + NADP(+) = [thioredoxin]-disulfide + NADPH + H(+). The sequence is that of Thioredoxin reductase (trxB) from Listeria innocua serovar 6a (strain ATCC BAA-680 / CLIP 11262).